Reading from the N-terminus, the 1338-residue chain is ABC-type transporter kk1G (1338 aa).

The tract at residues 1–21 is disordered; that stretch reads MSAIELPPLRSRSEEAARAEH. Residues 11–21 show a composition bias toward basic and acidic residues; that stretch reads SRSEEAARAEH. 6 consecutive transmembrane segments (helical) span residues 75 to 95, 130 to 150, 203 to 223, 230 to 250, 312 to 332, and 340 to 360; these read YFLI…MPLM, LYIF…MLAI, HFAT…VALV, LIAS…FPPF, TMSP…WFGI, and ISSV…VMNI. The region spanning 80–372 is the ABC transmembrane type-1 1 domain; that stretch reads LCCFTSIGAG…VASPIISIAK (293 aa). The ABC transporter 1 domain maps to 405-706; it reads ITFINVAFSY…GDGVYYGLVH (302 aa). 440–447 is an ATP binding site; it reads GPSGSGKS. Disordered regions lie at residues 473–518 and 715–747; these read EIPS…TCTG and EDDD…HASR. The next 6 membrane-spanning stretches (helical) occupy residues 777-797, 816-836, 895-917, 919-941, 1003-1023, and 1037-1057; these read VCCI…YIFA, FWAG…YLLG, MSMA…VYGW, LSLV…RTRL, IIFA…FWYG, and FFIV…WFSF. An ABC transmembrane type-1 2 domain is found at 777 to 1063; that stretch reads VCCIGILGAG…WFSFTPSMAQ (287 aa). In terms of domain architecture, ABC transporter 2 spans 1096–1333; it reads IEFQHVSFKY…KGVYWQMCQA (238 aa). Residue 1130-1137 coordinates ATP; the sequence is GSSGCGKS.

Belongs to the ABC transporter superfamily. ABCB family. Multidrug resistance exporter (TC 3.A.1.201) subfamily.

Its subcellular location is the cell membrane. The protein operates within secondary metabolite biosynthesis. Its function is as follows. ABC transporter; part of the gene cluster that mediates the biosynthesis of KK-1, a novel cyclic depsipeptide with 10 residues which is a promising active compound with high activity against many plant pathogens, especially Botrytis cinerea. Is probably directly involved in the secretion of KK-1 and thus confers self-tolerance against KK-1. This is ABC-type transporter kk1G from Curvularia clavata.